A 1093-amino-acid chain; its full sequence is MNMLILKLPKMFSQLWLLLILSLLTLEGPQPSTGSGYTTKSSVDLLENDSRYISYQDLMSTAKRFYDPETTWYSEMLFDVARNQVIVGARDTLYRMSFDLEPLERASWGATPSEIAMCQAKGQSERWCRNYVRVLHSYGENQLYACGTNAFQPSCSWRQMENLTVTGVDSGVVKCPFHPQANSTSLLQSNGQLFVGTATDFSGSDVAILRTGVESNKRFLRTKQYNNNWLSGAQFVGSFEAGHFVYFLLRESAAEHMSCGKVIYSRVARVCKNDVGGGGQLLRDNWTSFLKARLNCSLPGEYPYYFDEIQGMTYAESESILYATFRTSGSSIFGSAVCAYNLSSINAAFDGPFKQQEHSDAAWKTVNTNQRSQFQCGTSSIGHWLESSRYQLMDEAVQPIGAEPLYHSKLEQFGRLALDIINTKTEQVHVLFVASSGNHIKKLSVKYDGDGVQTCLVELWQADDTGTSSLLNMAYLKVSDSLYLGTDLALTRIPAQHCSRHVSQSSCLNSMDPYCGWNELVERCMPQPQDSSVLQHWHQAPQITCPVLNAPIDGGWSTWSPWAVCQQHEQPDSNCQCRQRSCNNPQPQHGGATCEGISTQVTNCTQHGGWTEWSAWSPCSQTCGIAVKIRRRTCGNPRPAFGGRTCVGSEQSEMYCRHLPPCPVAKPQSVDGGWGPWGEWSECSAQCGGGFRMRRRECNDPAPLNGGMECPGCRLDYEECNMQSCQEVRKLSAWTPWLTVTGSGNSSEPHMERRFRFVCRATSPDPSSVRIGLPKEESRNCHADGSCQRQVDHDSADSDAADWSPCSVSCGGGVQQRHRGRGSQSRVCNIHACPAEEQLSSNSLDNELEHGEWGCWSEWSACSVTCGLGLRRRTRRCLAGHDRLCQGRALEEQKCEMVPCEDFLGWSAWSEWSSCSSDGIRLRHRRCLVEQPGSMECRGAEFEKTACVPNECEETQTASTATLPIVIFVGLLFTVACCLATYRFTKKRFMLSAEEALNKTTTTTASFDTYPNQYSSLPTKDYYDQRPKRQSSFRMPAKTSNLGNGNGTLNRNNMHQNNTPKVLAKTYIDCESGTIKRQSALNNCRSNIDDEKF.

A signal peptide spans 1–34; sequence MNMLILKLPKMFSQLWLLLILSLLTLEGPQPSTG. The N-linked (GlcNAc...) asparagine glycan is linked to Asn-48. The 446-residue stretch at 50 to 495 folds into the Sema domain; sequence SRYISYQDLM…TDLALTRIPA (446 aa). 2 cysteine pairs are disulfide-bonded: Cys-118–Cys-128 and Cys-146–Cys-155. Asn-162, Asn-182, Asn-285, and Asn-295 each carry an N-linked (GlcNAc...) asparagine glycan. 2 disulfide bridges follow: Cys-271/Cys-376 and Cys-296/Cys-338. Residue Asn-341 is glycosylated (N-linked (GlcNAc...) asparagine). Positions 497–546 constitute a PSI domain; sequence HCSRHVSQSSCLNSMDPYCGWNELVERCMPQPQDSSVLQHWHQAPQITCP. 3 TSP type-1 domains span residues 553–605, 607–663, and 671–726; these read DGGW…TNCT, HGGW…PPCP, and DGGW…QSCQ. N-linked (GlcNAc...) asparagine glycosylation occurs at Asn-603. 6 cysteine pairs are disulfide-bonded: Cys-619–Cys-656, Cys-623–Cys-662, Cys-634–Cys-646, Cys-683–Cys-720, Cys-687–Cys-725, and Cys-698–Cys-710. N-linked (GlcNAc...) asparagine glycosylation is present at Asn-745. 3 consecutive TSP type-1 domains span residues 794 to 834, 850 to 901, and 904 to 953; these read DSAD…HACP, HGEW…VPCE, and LGWS…NECE. 3 disulfides stabilise this stretch: Cys-862–Cys-895, Cys-866–Cys-900, and Cys-877–Cys-885. Residues 960 to 980 form a helical membrane-spanning segment; the sequence is TATLPIVIFVGLLFTVACCLA. 2 N-linked (GlcNAc...) asparagine glycosylation sites follow: Asn-998 and Asn-1046. The disordered stretch occupies residues 1018–1056; sequence PTKDYYDQRPKRQSSFRMPAKTSNLGNGNGTLNRNNMHQ. Low complexity predominate over residues 1041-1053; it reads NLGNGNGTLNRNN.

The protein belongs to the semaphorin family. In egg chambers, high levels of expression in the follicle cells, with little to no expression in the germ cells (at protein level). In stage 3 to 7 egg chambers, planar polarized at the basal epithelial surface (at protein level).

The protein resides in the apical cell membrane. It is found in the lateral cell membrane. It localises to the endosome. Regulates the motility of migrating epithelial cells by providing guidance cues within the migratory environment and may also play a role in development of the olfactory system. May act as a positive axonal guidance cue. Function in neurons is essential for adult survival and is important for climbing behavior. Promotes collective migration of follicular epithelial cells in egg chambers, likely by acting at the leading edge of the basal epithelium cells to provide guidance cues across the cell boundary to the trailing edge of the cell ahead. The transmembrane receptor PlexA on the trailing edge of the cell ahead, appears to transduce this signal to suppress the formation of protrusions. Involved in olfactory avoidance behavior. The sequence is that of Semaphorin 5c from Drosophila melanogaster (Fruit fly).